The chain runs to 371 residues: MPNHHTLLSSSLFPVGSNISTWWNFGSMLLTCTALQISTGFFLAVHYTANINLAFSSIIHITRDVPYGWIMQNLHAIGASLFFLCIYIHIARGLYYGLYMNKGVWLSGTTLLIILMATAFFGYVLPWGQMSFWAATVITNLLTAVPYLGNSLTTWLWGGFSINDPTLTRFFALHFILPFLITSLSSIHIILLHNEGSNNPLGTNSDIDKVPIHPYHSYKDMFMISSMITLLFIVLSFMPDLLNDPENFSKANPMTTPQHIKPEWYFLFAYSILRSIPNKLGGTLALLMSVIILTTTPFTHTSYIRPMTFRPLTQALFWTLIATFITITWTATKQVEPPFTLISQVASVTYFSFFIINPIFGWAENKTMMNN.

Helical transmembrane passes span 25–45 (FGSM…FLAV), 69–90 (WIMQ…YIHI), 105–125 (WLSG…GYVL), and 170–190 (FFAL…IHII). Heme b is bound by residues H75 and H89. Residues H174 and H188 each contribute to the heme b site. H193 contacts a ubiquinone. The next 4 helical transmembrane spans lie at 218-238 (YKDM…LSFM), 280-300 (LGGT…PFTH), 312-332 (LTQA…WTAT), and 339-358 (FTLI…IINP).

This sequence belongs to the cytochrome b family. As to quaternary structure, the cytochrome bc1 complex contains 3 respiratory subunits (MT-CYB, CYC1 and UQCRFS1), 2 core proteins (UQCRC1 and UQCRC2) and probably 6 low-molecular weight proteins. Heme b serves as cofactor.

It is found in the mitochondrion inner membrane. Functionally, component of the ubiquinol-cytochrome c reductase complex (complex III or cytochrome b-c1 complex) that is part of the mitochondrial respiratory chain. The b-c1 complex mediates electron transfer from ubiquinol to cytochrome c. Contributes to the generation of a proton gradient across the mitochondrial membrane that is then used for ATP synthesis. The chain is Cytochrome b (MT-CYB) from Toxicocalamus preussi (Preuss's forest snake).